Here is a 370-residue protein sequence, read N- to C-terminus: Phospho-N-acetylmuramoyl-pentapeptide-transferase (370 aa).

11 helical membrane passes run 15-35 (PLEG…AAFA), 44-64 (LLSL…WWGV), 93-113 (MGGL…SWSG), 115-135 (AAEQ…VGGI), 155-175 (LLLQ…RGWI), 183-203 (FDIN…VFLA), 213-233 (GLDG…ALQL), 240-260 (GDPS…GFLV), 268-288 (VFMG…VALL), 296-316 (LIMG…VWVF), and 347-367 (QLVV…GIFF).

Belongs to the glycosyltransferase 4 family. MraY subfamily. Mg(2+) is required as a cofactor.

Its subcellular location is the cell inner membrane. The catalysed reaction is UDP-N-acetyl-alpha-D-muramoyl-L-alanyl-gamma-D-glutamyl-meso-2,6-diaminopimeloyl-D-alanyl-D-alanine + di-trans,octa-cis-undecaprenyl phosphate = di-trans,octa-cis-undecaprenyl diphospho-N-acetyl-alpha-D-muramoyl-L-alanyl-D-glutamyl-meso-2,6-diaminopimeloyl-D-alanyl-D-alanine + UMP. Its pathway is cell wall biogenesis; peptidoglycan biosynthesis. Functionally, catalyzes the initial step of the lipid cycle reactions in the biosynthesis of the cell wall peptidoglycan: transfers peptidoglycan precursor phospho-MurNAc-pentapeptide from UDP-MurNAc-pentapeptide onto the lipid carrier undecaprenyl phosphate, yielding undecaprenyl-pyrophosphoryl-MurNAc-pentapeptide, known as lipid I. This is Phospho-N-acetylmuramoyl-pentapeptide-transferase from Synechococcus sp. (strain CC9311).